The chain runs to 305 residues: Superkiller complex protein 8 (305 aa).

WD repeat units lie at residues A14 to Q57, G62 to S101, A104 to S143, T146 to E187, G188 to T227, G230 to T269, and D272 to M305.

The protein belongs to the SKI8 family. As to quaternary structure, component of the PAF1 complex. Component of the SKI complex.

It is found in the nucleus. Its subcellular location is the cytoplasm. Functionally, component of the PAF1 complex (PAF1C) which has multiple functions during transcription by RNA polymerase II and is implicated in regulation of development and maintenance of embryonic stem cell pluripotency. PAF1C associates with RNA polymerase II through interaction with POLR2A CTD non-phosphorylated and 'Ser-2'- and 'Ser-5'-phosphorylated forms and is involved in transcriptional elongation, acting both independently and synergistically with TCEA1 and in cooperation with the DSIF complex and HTATSF1. Also acts as a component of the SKI complex, a multiprotein complex that assists the RNA-degrading exosome during the mRNA decay and quality-control pathways. The SKI complex catalyzes mRNA extraction from 80S ribosomal complexes in the 3'-5' direction and channels mRNA to the cytosolic exosome for degradation. In Danio rerio (Zebrafish), this protein is Superkiller complex protein 8 (skic8).